The sequence spans 257 residues: Protein UL133 (257 aa).

2 helical membrane-spanning segments follow: residues 14-34 (WGVP…IWCL) and 45-65 (PGIA…AYLI). The tract at residues 149-232 (PTVFVPPPSE…AMPQMPPGVA (84 aa)) is disordered. Residues 164 to 175 (VIPPQPPTPTSE) show a composition bias toward pro residues. Positions 179-193 (KKGRAKDKPKGRPKN) are enriched in basic residues. Pro residues predominate over residues 214–228 (GGPPDASPPAMPQMP).

It localises to the host Golgi apparatus membrane. The polypeptide is Protein UL133 (UL133) (Human cytomegalovirus (strain Merlin) (HHV-5)).